We begin with the raw amino-acid sequence, 184 residues long: Cathelicidin-related peptide Pt_CRAMP1 (184 aa).

Residues 1–22 (MEGFFWKTWLVVAAFAIGGTSS) form the signal peptide. A propeptide spanning residues 23–150 (LPHKPLTYEE…EDEKDQPRRV (128 aa)) is cleaved from the precursor. Intrachain disulfides connect cysteine 81–cysteine 92 and cysteine 103–cysteine 120. The span at 125–144 (EDEEQNQEEEEEEEKEEDEK) shows a compositional bias: acidic residues. Positions 125 to 147 (EDEEQNQEEEEEEEKEEDEKDQP) are disordered.

This sequence belongs to the cathelicidin family. As to expression, expressed by the venom gland.

It is found in the secreted. The protein resides in the target cell membrane. Its function is as follows. Potent antimicrobial peptide against Gram-negative (MIC=2 ug/ml against E.coli ATCC 25922, MIC=8 ug/ml against P.aeruginosa) and Gram-positive bacteria (MIC=32 ug/ml against E.faecalis, MIC=32 ug/ml against S.aureus). Adopts an amphipathic alpha helical conformation, that may allow to partition into the target membrane. High hemolytic activities have been observed on mammalian cells. The protein is Cathelicidin-related peptide Pt_CRAMP1 of Pseudonaja textilis (Eastern brown snake).